Here is a 250-residue protein sequence, read N- to C-terminus: MADS-box transcription factor 47 (250 aa).

Residues 1-10 show a composition bias toward gly residues; sequence MAGGGGGGGR. 2 disordered regions span residues 1-20 and 196-250; these read MAGGGGGGGRGEGEGRAATG and SRME…FSSK. Over residues 11-20 the composition is skewed to basic and acidic residues; sequence GEGEGRAATG. Residues 20-80 form the MADS-box domain; it reads GKRERIAIRR…GKLFQFASTS (61 aa). A K-box domain is found at 106-198; sequence QGEDSSTCAR…QLQVSRMSRM (93 aa). The span at 214–224 shows a compositional bias: polar residues; sequence GQSSESVTNAS.

May interact with MADS18. In terms of tissue distribution, expressed in roots, shoots and developing panicles. Expressed in mature stems and leaves, flowering panicles, developing seeds, and mature seeds.

The protein localises to the nucleus. Functionally, transcription factor that modulates expressions of multiple genes involved in cell signaling and gene transcription. Plays a negative regulatory role in brassinosteroid signaling. The protein is MADS-box transcription factor 47 of Oryza sativa subsp. japonica (Rice).